Consider the following 520-residue polypeptide: Bifunctional purine biosynthesis protein PurH (520 aa).

In terms of domain architecture, MGS-like spans 1 to 150 (MSDDRKAIKR…KNHPSVAVVV (150 aa)).

Belongs to the PurH family.

It catalyses the reaction (6R)-10-formyltetrahydrofolate + 5-amino-1-(5-phospho-beta-D-ribosyl)imidazole-4-carboxamide = 5-formamido-1-(5-phospho-D-ribosyl)imidazole-4-carboxamide + (6S)-5,6,7,8-tetrahydrofolate. The enzyme catalyses IMP + H2O = 5-formamido-1-(5-phospho-D-ribosyl)imidazole-4-carboxamide. The protein operates within purine metabolism; IMP biosynthesis via de novo pathway; 5-formamido-1-(5-phospho-D-ribosyl)imidazole-4-carboxamide from 5-amino-1-(5-phospho-D-ribosyl)imidazole-4-carboxamide (10-formyl THF route): step 1/1. Its pathway is purine metabolism; IMP biosynthesis via de novo pathway; IMP from 5-formamido-1-(5-phospho-D-ribosyl)imidazole-4-carboxamide: step 1/1. The chain is Bifunctional purine biosynthesis protein PurH from Corynebacterium glutamicum (strain ATCC 13032 / DSM 20300 / JCM 1318 / BCRC 11384 / CCUG 27702 / LMG 3730 / NBRC 12168 / NCIMB 10025 / NRRL B-2784 / 534).